The primary structure comprises 132 residues: Glycine cleavage system H protein (132 aa).

The 83-residue stretch at 24 to 106 (IATIGLSAFA…YGDGWLIKVR (83 aa)) folds into the Lipoyl-binding domain. Lysine 65 bears the N6-lipoyllysine mark.

This sequence belongs to the GcvH family. As to quaternary structure, the glycine cleavage system is composed of four proteins: P, T, L and H. Requires (R)-lipoate as cofactor.

Functionally, the glycine cleavage system catalyzes the degradation of glycine. The H protein shuttles the methylamine group of glycine from the P protein to the T protein. This is Glycine cleavage system H protein from Rippkaea orientalis (strain PCC 8801 / RF-1) (Cyanothece sp. (strain PCC 8801)).